The chain runs to 151 residues: Probable cGMP 3',5'-cyclic phosphodiesterase subunit delta (151 aa).

This sequence belongs to the PDE6D/unc-119 family. As to quaternary structure, interacts with Pde6.

Its subcellular location is the nucleus. The protein localises to the cytoplasm. The protein is Probable cGMP 3',5'-cyclic phosphodiesterase subunit delta of Drosophila persimilis (Fruit fly).